A 488-amino-acid polypeptide reads, in one-letter code: Transmembrane protein 39A (488 aa).

N-linked (GlcNAc...) asparagine glycans are attached at residues N31 and N39. Transmembrane regions (helical) follow at residues 72–92, 110–130, and 155–175; these read GLLF…IQYI, TSLN…VMLA, and LITA…WTLV. N180 carries N-linked (GlcNAc...) asparagine glycosylation. 5 helical membrane passes run 182–202, 287–307, 319–339, 420–440, and 446–466; these read SVLN…LCCF, EVLF…LCFV, CEHL…QLLP, LLNL…YSLL, and NHTL…FKLL.

The protein belongs to the TMEM39 family.

It localises to the endoplasmic reticulum membrane. In terms of biological role, regulates autophagy by controlling the spatial distribution and levels of the intracellular phosphatidylinositol 4-phosphate (PtdIns(4)P) pools. Modulates (PtdIns(4)P) levels by regulating the ER-to-Golgi trafficking of the phosphatidylinositide phosphatase SACM1L. The chain is Transmembrane protein 39A (tmem39a) from Xenopus tropicalis (Western clawed frog).